A 352-amino-acid polypeptide reads, in one-letter code: Small ribosomal subunit biogenesis GTPase RsgA (352 aa).

Over residues 1 to 15 (MTKRKLTQNQKRRIH) the composition is skewed to basic residues. The interval 1-26 (MTKRKLTQNQKRRIHSNNVKALDRHH) is disordered. Residues 106–274 (ENEIARPDYY…LIDSPGIREF (169 aa)) form the CP-type G domain. GTP is bound by residues 162 to 165 (NKVD) and 216 to 224 (GQSGVGKSS). Zn(2+) contacts are provided by Cys-298, Cys-303, His-305, and Cys-311.

It belongs to the TRAFAC class YlqF/YawG GTPase family. RsgA subfamily. Monomer. Associates with 30S ribosomal subunit, binds 16S rRNA. The cofactor is Zn(2+).

The protein resides in the cytoplasm. In terms of biological role, one of several proteins that assist in the late maturation steps of the functional core of the 30S ribosomal subunit. Helps release RbfA from mature subunits. May play a role in the assembly of ribosomal proteins into the subunit. Circularly permuted GTPase that catalyzes slow GTP hydrolysis, GTPase activity is stimulated by the 30S ribosomal subunit. The polypeptide is Small ribosomal subunit biogenesis GTPase RsgA (Mannheimia succiniciproducens (strain KCTC 0769BP / MBEL55E)).